Here is a 328-residue protein sequence, read N- to C-terminus: Probable membrane-associated kinase regulator 4 (328 aa).

Residues 213-253 (GQIKTERPKKQSNGSVSGSHRRSFSVSMRRQAAKSSNNKSS) are disordered. The span at 223 to 240 (QSNGSVSGSHRRSFSVSM) shows a compositional bias: polar residues.

It is found in the cell membrane. This is Probable membrane-associated kinase regulator 4 (MAKR4) from Arabidopsis thaliana (Mouse-ear cress).